The following is a 934-amino-acid chain: 3-hydroxy-3-methylglutaryl-coenzyme A reductase (934 aa).

Topologically, residues 1-111 (MFYHGASANQ…VLNLVRGAET (111 aa)) are lumenal. A helical transmembrane segment spans residues 112 to 132 (FDIALVTCAYIAMFYTLFNLF). One can recognise an SSD domain in the interval 113–280 (DIALVTCAYI…STFLSAILSL (168 aa)). The Cytoplasmic portion of the chain corresponds to 133-141 (ARMRAVGSK). Residues 142-162 (VWLGLSTLVSSFFAFLFALYI) form a helical membrane-spanning segment. The Lumenal segment spans residues 163 to 168 (TTRVLD). The helical transmembrane segment at 169–189 (LSIPFLSLSEGIPFFVAVVGF) threads the bilayer. Topologically, residues 190–231 (NNKILLAEKVLQNQLNAQSSKNDAPTVLYQALREQGPLLLRD) are cytoplasmic. A helical transmembrane segment spans residues 232 to 252 (HLFMITAFLGCSFYASYLDGL). Topologically, residues 253–256 (KNFC) are lumenal. Residues 257-277 (ILAALILAFDILTTSTFLSAI) traverse the membrane as a helical segment. Topologically, residues 278–334 (LSLKLEINQIHRSTLLREQLEDDGLTETTVDDVLKSNSLAGTKTFTDAPSTLVTVAK) are cytoplasmic. The chain crosses the membrane as a helical span at residues 335–355 (VAGVSVFFGLHFYGFGSAWLS). Residues 356–421 (DLSAGNETND…GLISTAARDK (66 aa)) are Lumenal-facing. 3 N-linked (GlcNAc...) asparagine glycosylation sites follow: Asn-361, Asn-364, and Asn-382. Residues 422-442 (YISKFILFAFAVSASINVYLL) traverse the membrane as a helical segment. Over 443 to 934 (NVARIHTTRL…MQHNRAAAKK (492 aa)) the chain is Cytoplasmic. Glu-618 (charge relay system) is an active-site residue. Position 624 to 630 (624 to 630 (SAMRGCK)) interacts with CoA. Residues 685–687 (SRF) and 712–720 (DAMGMNMIS) contribute to the NADP(+) site. Lys-752 (charge relay system) is an active-site residue. 781–783 (VLK) serves as a coordination point for CoA. Residue Asp-828 is the Charge relay system of the active site. 923-924 (SH) is a binding site for CoA. His-924 acts as the Proton donor in catalysis. Residue 928-929 (NR) participates in NADP(+) binding.

The protein belongs to the HMG-CoA reductase family.

Its subcellular location is the endoplasmic reticulum membrane. It carries out the reaction (R)-mevalonate + 2 NADP(+) + CoA = (3S)-3-hydroxy-3-methylglutaryl-CoA + 2 NADPH + 2 H(+). The protein operates within metabolic intermediate biosynthesis; (R)-mevalonate biosynthesis; (R)-mevalonate from acetyl-CoA: step 3/3. In terms of biological role, HMG-CoA reductase; part of the first module of ergosterol biosynthesis pathway that includes the early steps of the pathway, conserved across all eukaryotes, and which results in the formation of mevalonate from acetyl-coenzyme A (acetyl-CoA). In this module, the cytosolic acetyl-CoA acetyltransferase catalyzes the formation of acetoacetyl-CoA. The hydroxymethylglutaryl-CoA synthase then condenses acetyl-CoA with acetoacetyl-CoA to form HMG-CoA. The rate-limiting step of the early module is the reduction to mevalonate by the 3-hydroxy-3-methylglutaryl-coenzyme A (HMG-CoA) reductase. The sequence is that of 3-hydroxy-3-methylglutaryl-coenzyme A reductase from Cyberlindnera jadinii (Torula yeast).